The following is a 472-amino-acid chain: ATP synthase subunit beta (472 aa).

ATP is bound at residue 157 to 164; the sequence is GGAGVGKT.

Belongs to the ATPase alpha/beta chains family. F-type ATPases have 2 components, CF(1) - the catalytic core - and CF(0) - the membrane proton channel. CF(1) has five subunits: alpha(3), beta(3), gamma(1), delta(1), epsilon(1). CF(0) has three main subunits: a(1), b(2) and c(9-12). The alpha and beta chains form an alternating ring which encloses part of the gamma chain. CF(1) is attached to CF(0) by a central stalk formed by the gamma and epsilon chains, while a peripheral stalk is formed by the delta and b chains.

Its subcellular location is the cell inner membrane. The catalysed reaction is ATP + H2O + 4 H(+)(in) = ADP + phosphate + 5 H(+)(out). In terms of biological role, produces ATP from ADP in the presence of a proton gradient across the membrane. The catalytic sites are hosted primarily by the beta subunits. The protein is ATP synthase subunit beta of Desulfatibacillum aliphaticivorans.